A 275-amino-acid polypeptide reads, in one-letter code: Phosphate import ATP-binding protein PstB (275 aa).

An ABC transporter domain is found at V29 to I270. ATP is bound at residue G61–S68.

This sequence belongs to the ABC transporter superfamily. Phosphate importer (TC 3.A.1.7) family. The complex is composed of two ATP-binding proteins (PstB), two transmembrane proteins (PstC and PstA) and a solute-binding protein (PstS).

It is found in the cell inner membrane. The catalysed reaction is phosphate(out) + ATP + H2O = ADP + 2 phosphate(in) + H(+). Part of the ABC transporter complex PstSACB involved in phosphate import. Responsible for energy coupling to the transport system. This chain is Phosphate import ATP-binding protein PstB, found in Rhodopseudomonas palustris (strain BisB18).